Consider the following 592-residue polypeptide: Zinc metalloproteinase dpy-31 (592 aa).

A signal peptide spans 1–18; the sequence is MHKIFIIFGLLSLCAAHS. A propeptide spanning residues 19-127 is cleaved from the precursor; sequence LRDLSNKDEE…TEGKTRVKRK (109 aa). A disordered region spans residues 22 to 46; sequence LSNKDEEDPPSSAPGVRKRRMMSEE. The region spanning 127–326 is the Peptidase M12A domain; that stretch reads KFIGSNLRRW…IRLMNKIYCS (200 aa). Asn-167 carries an N-linked (GlcNAc...) asparagine glycan. Intrachain disulfides connect Cys-170–Cys-325 and Cys-193–Cys-214. His-222 contributes to the Zn(2+) binding site. Residue Glu-223 is part of the active site. Zn(2+) is bound by residues His-226 and His-232. The EGF-like domain occupies 349–361; it reads CRCPDGFTGQYCE. Cysteines 371 and 399 form a disulfide. Residues 371 to 487 form the CUB domain; it reads CGGKISLTRS…KGFEARARAV (117 aa). A glycan (N-linked (GlcNAc...) asparagine) is linked at Asn-438. The TSP type-1 domain occupies 490-540; sequence AGNWNSWSPWTACSATCGACGSRMRTRTCPPGNACSGEPVETQICNTQACT. Disulfide bonds link Cys-502–Cys-534, Cys-506–Cys-539, and Cys-518–Cys-524.

Requires Zn(2+) as cofactor. Expressed in hypodermis, rectal and vulval epithelial cells and amphid socket cells.

The protein resides in the secreted. Metalloprotease which cleaves the carboxyl terminus of procollagens, such as sqt-3, to mature collagens. Involved in cuticular collagen maturation. This chain is Zinc metalloproteinase dpy-31, found in Caenorhabditis elegans.